Consider the following 106-residue polypeptide: Putative membrane protein insertion efficiency factor (106 aa).

This sequence belongs to the UPF0161 family.

The protein localises to the cell inner membrane. Its function is as follows. Could be involved in insertion of integral membrane proteins into the membrane. This is Putative membrane protein insertion efficiency factor from Acinetobacter baumannii (strain AB307-0294).